Consider the following 363-residue polypeptide: Sorting nexin-21 (363 aa).

Positions 1-11 (MASRLLHRLRH) are enriched in basic residues. Residues 1–99 (MASRLLHRLR…PPPDGQRSSQ (99 aa)) are disordered. Low complexity predominate over residues 12-28 (ALASDGPGEAAAGPEAE). Residues 46–56 (SRLSGTLSFTS) show a composition bias toward polar residues. Residues 57-71 (AEDDPDDEDEDDEAG) are compositionally biased toward acidic residues. One can recognise a PX domain in the interval 119–236 (QRLLFEVTSA…DFFVLPELRR (118 aa)). Arg-161, Ser-163, Lys-188, and Arg-202 together coordinate a 1,2-diacyl-sn-glycero-3-phospho-(1D-myo-inositol-3-phosphate).

The protein belongs to the sorting nexin family. In terms of assembly, monomer.

It is found in the cytoplasmic vesicle membrane. It localises to the early endosome membrane. In terms of biological role, binds to membranes enriched in phosphatidylinositol 3-phosphate (PtdIns(P3)) and phosphatidylinositol 4,5-bisphosphate. May be involved in several stages of intracellular trafficking. The chain is Sorting nexin-21 from Mus musculus (Mouse).